We begin with the raw amino-acid sequence, 730 residues long: Guanyl-specific ribonuclease pgl-1 (730 aa).

The involved in dimerization stretch occupies residues 205–447 (KQLMLDGPKS…VTRIVESLEK (243 aa)). H437 serves as the catalytic Proton acceptor. 2 stretches are compositionally biased toward polar residues: residues 452-472 (DTPS…QDSA) and 568-595 (DANQ…SPTK). Disordered regions lie at residues 452–475 (DTPS…AYTK), 567–639 (SDAN…TPMP), and 686–730 (GGRG…RGGF). The segment at 674-730 (GGGRGGYGGGDRGGRGGYGGDRGGRGGYGGGDRGGRGGYGGDRGRGGYGGRGGRGGF) is RNA-binding RGG-box.

In terms of assembly, homodimer. Interacts with pgl-2 and pgl-3; this association is not required for P-granule localization of either pgl-2 or pgl-3. Interacts with ife-1. Interacts with prmt-1; the interaction is direct. Interacts with nmad-1. Interacts with P granule components meg-1, meg-3 and meg-4. Requires Does not require metal ions for catalytic activity. as cofactor. Methylated at arginine residues in the RNA-binding RGG-box by prmt-1. Methylation promotes P-granule degradation by autophagy. In terms of tissue distribution, expressed in the germline. Expressed in most somatic cells.

It localises to the cytoplasmic granule. It carries out the reaction [RNA] containing guanosine + H2O = an [RNA fragment]-3'-guanosine-3'-phosphate + a 5'-hydroxy-ribonucleotide-3'-[RNA fragment].. With respect to regulation, not inhibited by RNase inhibitor RNasin. Functionally, guanyl-specific endoribonuclease which cleaves the phosphodiester bond in single-stranded RNA between the 3'-guanylic residue and the 5'-OH residue of adjacent nucleotide, resulting in the formation of a corresponding 2',3'-cyclic phosphate intermediate. Together with the P-granule component pgl-3, is involved in the formation of P-granules. Together with pgl-3, probably recruits other granule components such as pos-1, mex-3 and glh-1 to P-granules. In addition, may act redundantly with pgl-3 to protect germ cells from excessive germline apoptosis during normal oogenesis and development of the two gonadal arms. This may in part be through regulating the localization of sir-2.1 which is involved in germ cell apoptosis. May protect somatic cells from excessive apoptosis during normal development. Essential role in male and female postembryonic germline development; maternally provided protein maintains a population of proliferating germ cells and zygotic expression is required for correct oogenesis. The chain is Guanyl-specific ribonuclease pgl-1 from Caenorhabditis elegans.